The primary structure comprises 218 residues: Imidazole glycerol phosphate synthase subunit HisH (218 aa).

The Glutamine amidotransferase type-1 domain occupies 1–213 (MTTIIDYGIG…AALPTTEEAG (213 aa)). The active-site Nucleophile is the cysteine 79. Active-site residues include histidine 188 and glutamate 190.

Heterodimer of HisH and HisF.

The protein localises to the cytoplasm. It catalyses the reaction 5-[(5-phospho-1-deoxy-D-ribulos-1-ylimino)methylamino]-1-(5-phospho-beta-D-ribosyl)imidazole-4-carboxamide + L-glutamine = D-erythro-1-(imidazol-4-yl)glycerol 3-phosphate + 5-amino-1-(5-phospho-beta-D-ribosyl)imidazole-4-carboxamide + L-glutamate + H(+). The enzyme catalyses L-glutamine + H2O = L-glutamate + NH4(+). It participates in amino-acid biosynthesis; L-histidine biosynthesis; L-histidine from 5-phospho-alpha-D-ribose 1-diphosphate: step 5/9. Functionally, IGPS catalyzes the conversion of PRFAR and glutamine to IGP, AICAR and glutamate. The HisH subunit catalyzes the hydrolysis of glutamine to glutamate and ammonia as part of the synthesis of IGP and AICAR. The resulting ammonia molecule is channeled to the active site of HisF. The sequence is that of Imidazole glycerol phosphate synthase subunit HisH from Salinibacter ruber (strain DSM 13855 / M31).